A 213-amino-acid chain; its full sequence is MEDPKGAWQSDVFDNGRDFKPHDKAPANVTAGTTPPMYNVGAGGSEGNSKALSIISIVLRCLSIMFNVVSLGVIASNQGKSYFVVWRTLNSSNMQYLFAINVIVLVYCVVQLILSIINLVQGKMVLSGPTQPASTITYICDQGLTYMLMAGFGAGVALQASVDKGESGMLDCSGANEFCGKNKASAALSFLGFVCIALSANLNYLRLYFMAAK.

Positions 1–26 (MEDPKGAWQSDVFDNGRDFKPHDKAP) are disordered. The Cytoplasmic segment spans residues 1 to 53 (MEDPKGAWQSDVFDNGRDFKPHDKAPANVTAGTTPPMYNVGAGGSEGNSKALS). Basic and acidic residues predominate over residues 14-25 (DNGRDFKPHDKA). The chain crosses the membrane as a helical span at residues 54–74 (IISIVLRCLSIMFNVVSLGVI). Topologically, residues 75 to 96 (ASNQGKSYFVVWRTLNSSNMQY) are extracellular. Asparagine 90 carries an N-linked (GlcNAc...) asparagine glycan. The helical transmembrane segment at 97 to 117 (LFAINVIVLVYCVVQLILSII) threads the bilayer. Residues 118 to 137 (NLVQGKMVLSGPTQPASTIT) lie on the Cytoplasmic side of the membrane. The chain crosses the membrane as a helical span at residues 138–158 (YICDQGLTYMLMAGFGAGVAL). At 159–184 (QASVDKGESGMLDCSGANEFCGKNKA) the chain is on the extracellular side. A helical transmembrane segment spans residues 185 to 205 (SAALSFLGFVCIALSANLNYL). At 206–213 (RLYFMAAK) the chain is on the cytoplasmic side.

The protein belongs to the Casparian strip membrane proteins (CASP) family. As to quaternary structure, homodimer and heterodimers.

It localises to the cell membrane. This chain is CASP-like protein UU2, found in Physcomitrium patens (Spreading-leaved earth moss).